A 128-amino-acid chain; its full sequence is Large ribosomal subunit protein bL17 (128 aa).

It belongs to the bacterial ribosomal protein bL17 family. Part of the 50S ribosomal subunit. Contacts protein L32.

The sequence is that of Large ribosomal subunit protein bL17 from Klebsiella pneumoniae (strain 342).